The following is a 1733-amino-acid chain: Probable nuclear antigen (1733 aa).

Disordered regions lie at residues 1–41, 71–394, 437–506, 520–548, 882–907, 993–1141, 1223–1242, 1348–1475, 1585–1608, and 1630–1665; these read MNLF…THFT, PHPP…EQQV, AGAG…EGAQ, APAA…EGGA, LGGG…GAAL, AGGP…EDAA, PERV…RGHA, GAGP…GRAG, SGGG…WGSG, and PRRR…RGGC. Residues 21-31 are compositionally biased toward basic residues; it reads DHHHQQHHHHP. Residues 77-97 show a composition bias toward basic and acidic residues; that stretch reads PQDHHRPTPARDHRDPRDHLP. The segment covering 113–131 has biased composition (low complexity); it reads TTTTTIKDPQHPQDPLLLP. Residues 135–147 show a composition bias toward basic and acidic residues; sequence LQEEDPHLLRPTR. A compositionally biased stretch (pro residues) spans 179–189; the sequence is GGGPPSPPPRP. The segment covering 190–201 has biased composition (low complexity); that stretch reads STSSSSSHQGPP. Over residues 202–220 the composition is skewed to pro residues; that stretch reads STRPPPPQRPPPRWPPPSP. A compositionally biased stretch (polar residues) spans 227-240; the sequence is RAGSENTAQTLFSH. Positions 272–299 are enriched in pro residues; the sequence is PPPSPPPRPPPPLPPPPPPPPPPQPPPA. A compositionally biased stretch (basic residues) spans 316–326; it reads GGRRRGGKRRR. Residues 336-354 are compositionally biased toward acidic residues; sequence DAEEEEDGDGDEDEDEDRA. Positions 355–364 are enriched in basic and acidic residues; it reads EGEGREDGGE. Composition is skewed to gly residues over residues 365–374, 454–466, and 479–494; these read GPRGAGGGAG, GAPG…GLEG, and GGDG…GLGV. The segment covering 495–506 has biased composition (low complexity); sequence GLQQRRGAEGAQ. Positions 882–892 are enriched in gly residues; the sequence is LGGGGGGGQQR. Low complexity predominate over residues 893 to 907; sequence GSGVRSGPESEGAAL. Gly residues-rich tracts occupy residues 993–1004 and 1027–1043; these read AGGPGAGEAGGG and AGRG…LGEP. Composition is skewed to basic and acidic residues over residues 1078–1087 and 1100–1112; these read GAGDEGDRVR and RVAE…RHLL. Gly residues predominate over residues 1116 to 1127; that stretch reads GPEGGRGAGGRG. Positions 1385-1407 are enriched in gly residues; the sequence is GPGGLRGRGRGGRGGGGGGGGRG. 2 stretches are compositionally biased toward basic residues: residues 1408 to 1420 and 1444 to 1453; these read PRGR…RRWR and RGGRGGRGGR. Residues 1454–1474 are compositionally biased toward gly residues; sequence GRGGGRAPRGGGGGPGGGGRA. Residues 1652–1665 show a composition bias toward gly residues; that stretch reads RGAGRAGGGGRGGC.

This chain is Probable nuclear antigen, found in Sus scrofa (Pig).